The primary structure comprises 149 residues: UPF0178 protein CPF_2548 (149 aa).

It belongs to the UPF0178 family.

The protein is UPF0178 protein CPF_2548 of Clostridium perfringens (strain ATCC 13124 / DSM 756 / JCM 1290 / NCIMB 6125 / NCTC 8237 / Type A).